Here is a 1042-residue protein sequence, read N- to C-terminus: Starch synthase 3, chloroplastic/amyloplastic (1042 aa).

The N-terminal 44 residues, Met1 to Thr44, are a transit peptide targeting the chloroplast. The tract at residues Met1–Val63 is disordered. Residues Asn54 to Val63 show a composition bias toward polar residues. Residues Glu247–Leu302 adopt a coiled-coil conformation. An ADP-alpha-D-glucose-binding site is contributed by Lys608.

It belongs to the glycosyltransferase 1 family. Bacterial/plant glycogen synthase subfamily. As to expression, expressed in leaves and flowers.

The protein resides in the plastid. It localises to the chloroplast. It is found in the amyloplast. It carries out the reaction [(1-&gt;4)-alpha-D-glucosyl](n) + ADP-alpha-D-glucose = [(1-&gt;4)-alpha-D-glucosyl](n+1) + ADP + H(+). It functions in the pathway glycan biosynthesis; starch biosynthesis. Its function is as follows. Involved in the synthesis of glycan chains within amylopectin in leaves. May play a regulatory role in the control of starch accumulation in plastids. This is Starch synthase 3, chloroplastic/amyloplastic (SS3) from Arabidopsis thaliana (Mouse-ear cress).